Here is a 66-residue protein sequence, read N- to C-terminus: UPF0337 protein BA_0987/GBAA_0987/BAS0923 (66 aa).

The segment at 1-22 (MSESGLKEQITGKVEKTKGQVK) is disordered. Over residues 13–22 (KVEKTKGQVK) the composition is skewed to basic and acidic residues.

It belongs to the UPF0337 (CsbD) family.

This chain is UPF0337 protein BA_0987/GBAA_0987/BAS0923, found in Bacillus anthracis.